Here is a 1368-residue protein sequence, read N- to C-terminus: DNA-directed RNA polymerase subunit beta (1368 aa).

It belongs to the RNA polymerase beta chain family. The RNAP catalytic core consists of 2 alpha, 1 beta, 1 beta' and 1 omega subunit. When a sigma factor is associated with the core the holoenzyme is formed, which can initiate transcription.

The enzyme catalyses RNA(n) + a ribonucleoside 5'-triphosphate = RNA(n+1) + diphosphate. Functionally, DNA-dependent RNA polymerase catalyzes the transcription of DNA into RNA using the four ribonucleoside triphosphates as substrates. The protein is DNA-directed RNA polymerase subunit beta of Cupriavidus pinatubonensis (strain JMP 134 / LMG 1197) (Cupriavidus necator (strain JMP 134)).